The following is a 193-amino-acid chain: MNLNDITFLLSVHGLDQLPEDGLPEFAFAGRSNVGKSSLMNTLLRRSGFVKVSGRPGKTQGLNFFQAAEDCMLVDLPGYGFARVSKEMQNNWQKLITSYISEREALKCVVVIIDIRHEPKALDRQLLDWLREQKVPVLPIYTKIDKLSGNQLSRHAAILDAGHGIKKDERILFSSKTGQGRDELIAVLESYLA.

Positions 22–193 constitute an EngB-type G domain; the sequence is GLPEFAFAGR…LIAVLESYLA (172 aa). GTP is bound by residues 30–37, 57–61, 75–78, 142–145, and 173–175; these read GRSNVGKS, GKTQG, DLPG, TKID, and FSS. Ser-37 and Thr-59 together coordinate Mg(2+).

This sequence belongs to the TRAFAC class TrmE-Era-EngA-EngB-Septin-like GTPase superfamily. EngB GTPase family. Mg(2+) is required as a cofactor.

In terms of biological role, necessary for normal cell division and for the maintenance of normal septation. This Desulfotalea psychrophila (strain LSv54 / DSM 12343) protein is Probable GTP-binding protein EngB.